The chain runs to 602 residues: Elongation factor 4 (602 aa).

Residues 6–188 (DRIRNFCIIA…RIVTRIPPPG (183 aa)) enclose the tr-type G domain. GTP is bound by residues 18–23 (DHGKST) and 135–138 (NKID).

It belongs to the TRAFAC class translation factor GTPase superfamily. Classic translation factor GTPase family. LepA subfamily.

Its subcellular location is the cell membrane. The catalysed reaction is GTP + H2O = GDP + phosphate + H(+). In terms of biological role, required for accurate and efficient protein synthesis under certain stress conditions. May act as a fidelity factor of the translation reaction, by catalyzing a one-codon backward translocation of tRNAs on improperly translocated ribosomes. Back-translocation proceeds from a post-translocation (POST) complex to a pre-translocation (PRE) complex, thus giving elongation factor G a second chance to translocate the tRNAs correctly. Binds to ribosomes in a GTP-dependent manner. This chain is Elongation factor 4, found in Pelotomaculum thermopropionicum (strain DSM 13744 / JCM 10971 / SI).